The following is a 390-amino-acid chain: Stearoyl-[acyl-carrier-protein] 9-desaturase, chloroplastic (390 aa).

Residues 1 to 27 constitute a chloroplast transit peptide; the sequence is MALKLCFPPHKMPSFPDARIRSHRVFM. Fe cation contacts are provided by glutamate 132, glutamate 170, histidine 173, glutamate 223, glutamate 256, and histidine 259.

The protein belongs to the fatty acid desaturase type 2 family. In terms of assembly, homodimer. Requires Fe(2+) as cofactor.

It localises to the plastid. It is found in the chloroplast. The enzyme catalyses octadecanoyl-[ACP] + 2 reduced [2Fe-2S]-[ferredoxin] + O2 + 2 H(+) = (9Z)-octadecenoyl-[ACP] + 2 oxidized [2Fe-2S]-[ferredoxin] + 2 H2O. It participates in lipid metabolism; fatty acid metabolism. Its function is as follows. Converts stearoyl-ACP to oleoyl-ACP by introduction of a cis double bond between carbons 9 and 10 of the acyl chain. The sequence is that of Stearoyl-[acyl-carrier-protein] 9-desaturase, chloroplastic from Olea europaea (Common olive).